The sequence spans 356 residues: Magnesium-chelatase subunit ChlI (356 aa).

Position 47 to 54 (47 to 54) interacts with ATP; it reads GDRGTGKS.

Belongs to the Mg-chelatase subunits D/I family.

It localises to the plastid. It is found in the chloroplast. It carries out the reaction protoporphyrin IX + Mg(2+) + ATP + H2O = Mg-protoporphyrin IX + ADP + phosphate + 3 H(+). Its pathway is porphyrin-containing compound metabolism; chlorophyll biosynthesis. Functionally, involved in chlorophyll biosynthesis; introduces a magnesium ion into protoporphyrin IX to yield Mg-protoporphyrin IX. The sequence is that of Magnesium-chelatase subunit ChlI (chlI) from Porphyra purpurea (Red seaweed).